A 119-amino-acid chain; its full sequence is Autophagy-related protein 8A (119 aa).

Residue glycine 117 is the site of Phosphatidylethanolamine amidated glycine attachment. The propeptide at 118-119 (SA) is removed in mature form.

The protein belongs to the ATG8 family. In terms of assembly, interacts with ATG4. In terms of processing, the C-terminal 2 residues are removed by ATG4 to expose Gly-117 at the C-terminus. The C-terminal Gly is then amidated with phosphatidylethanolamine by an activating system similar to that for ubiquitin. Constitutively expressed.

The protein localises to the cytoplasmic vesicle. It localises to the autophagosome membrane. It is found in the vacuole membrane. Its subcellular location is the cytoplasm. The protein resides in the cytoskeleton. Its function is as follows. Ubiquitin-like modifier involved in cytoplasm to vacuole transport (Cvt) vesicles and autophagosomes formation. May mediate the delivery of the vesicles and autophagosomes to the vacuole via the microtubule cytoskeleton. Ubiquitin-like modifier involved in autophagosomes formation. May mediate the delivery of the autophagosomes to the vacuole via the microtubule cytoskeleton. The polypeptide is Autophagy-related protein 8A (ATG8A) (Oryza sativa subsp. indica (Rice)).